A 215-amino-acid chain; its full sequence is Cytochrome b6 (215 aa).

Residues 32 to 52 (IFYCLGGITFTCFLVQVATGF) traverse the membrane as a helical segment. Cysteine 35 is a binding site for heme c. Heme b is bound by residues histidine 86 and histidine 100. Helical transmembrane passes span 90 to 110 (ASMMVLMMILHVFRVYLTGGF), 116 to 136 (STWISGVIMAVCTVSFGVTGY), and 186 to 206 (LHTFVLPLLTAVFMLAHFLMI). Heme b contacts are provided by histidine 187 and histidine 202.

Belongs to the cytochrome b family. PetB subfamily. In terms of assembly, the 4 large subunits of the cytochrome b6-f complex are cytochrome b6, subunit IV (17 kDa polypeptide, PetD), cytochrome f and the Rieske protein, while the 4 small subunits are PetG, PetL, PetM and PetN. The complex functions as a dimer. The cofactor is heme b. Heme c serves as cofactor.

It localises to the plastid. The protein resides in the chloroplast thylakoid membrane. Functionally, component of the cytochrome b6-f complex, which mediates electron transfer between photosystem II (PSII) and photosystem I (PSI), cyclic electron flow around PSI, and state transitions. The protein is Cytochrome b6 of Tetradesmus obliquus (Green alga).